A 326-amino-acid polypeptide reads, in one-letter code: D-alanine--D-alanine ligase (326 aa).

The ATP-grasp domain maps to 121–320 (ISVLRPYGIK…LKDLFGSTIE (200 aa)). 149–204 (VDKVGLPCFVKANRAGSSFGVTKVKTEDEIISAAKTAFTEDDEAIIESFLDGTEVS) is an ATP binding site. Glu275, Glu287, and Asn289 together coordinate Mg(2+).

It belongs to the D-alanine--D-alanine ligase family. The cofactor is Mg(2+). Requires Mn(2+) as cofactor.

It is found in the cytoplasm. The enzyme catalyses 2 D-alanine + ATP = D-alanyl-D-alanine + ADP + phosphate + H(+). The protein operates within cell wall biogenesis; peptidoglycan biosynthesis. In terms of biological role, cell wall formation. The chain is D-alanine--D-alanine ligase from Christiangramia forsetii (strain DSM 17595 / CGMCC 1.15422 / KT0803) (Gramella forsetii).